The sequence spans 476 residues: Chromosomal replication initiator protein DnaA (476 aa).

The segment at Met1 to Val87 is domain I, interacts with DnaA modulators. Residues Val87–Ser131 are domain II. The segment at Arg132 to Ala348 is domain III, AAA+ region. Residues Gly176, Gly178, Lys179, and Thr180 each coordinate ATP. The domain IV, binds dsDNA stretch occupies residues Ser349 to Met476.

It belongs to the DnaA family. Oligomerizes as a right-handed, spiral filament on DNA at oriC.

The protein localises to the cytoplasm. In terms of biological role, plays an essential role in the initiation and regulation of chromosomal replication. ATP-DnaA binds to the origin of replication (oriC) to initiate formation of the DNA replication initiation complex once per cell cycle. Binds the DnaA box (a 9 base pair repeat at the origin) and separates the double-stranded (ds)DNA. Forms a right-handed helical filament on oriC DNA; dsDNA binds to the exterior of the filament while single-stranded (ss)DNA is stabiized in the filament's interior. The ATP-DnaA-oriC complex binds and stabilizes one strand of the AT-rich DNA unwinding element (DUE), permitting loading of DNA polymerase. After initiation quickly degrades to an ADP-DnaA complex that is not apt for DNA replication. Binds acidic phospholipids. This is Chromosomal replication initiator protein DnaA from Clavibacter sepedonicus (Clavibacter michiganensis subsp. sepedonicus).